We begin with the raw amino-acid sequence, 573 residues long: Potassium-transporting ATPase potassium-binding subunit (573 aa).

Transmembrane regions (helical) follow at residues 6–26, 66–86, 135–155, 177–197, 257–277, 283–303, 382–402, 428–448, 493–513, and 537–557; these read ILFA…GSYI, FFSL…ILLL, ALAV…IALI, VFWI…FQGV, IQMV…GKWV, GWLI…VMTI, IFGG…LAVF, MFAL…AAVI, ITIA…VIML, and FIFA…TIFP.

This sequence belongs to the KdpA family. The system is composed of three essential subunits: KdpA, KdpB and KdpC.

It localises to the cell inner membrane. Part of the high-affinity ATP-driven potassium transport (or Kdp) system, which catalyzes the hydrolysis of ATP coupled with the electrogenic transport of potassium into the cytoplasm. This subunit binds the periplasmic potassium ions and delivers the ions to the membrane domain of KdpB through an intramembrane tunnel. The chain is Potassium-transporting ATPase potassium-binding subunit from Francisella tularensis subsp. holarctica (strain FTNF002-00 / FTA).